Here is a 199-residue protein sequence, read N- to C-terminus: Interleukin-11 (199 aa).

Residues 1–21 form the signal peptide; that stretch reads MNCVCRLVLVVLSLWPDRVVA. Positions 182–190 are important for interaction with IL11RA and for the stimulation of cell proliferation; the sequence is HLTLDWAVR.

This sequence belongs to the IL-6 superfamily. As to quaternary structure, interacts with either IL11RA1 or IL11RA2 to associate with IL6ST, giving rise to a multimeric signaling complex.

It is found in the secreted. Its function is as follows. Cytokine that stimulates the proliferation of hematopoietic stem cells and megakaryocyte progenitor cells and induces megakaryocyte maturation resulting in increased platelet production. Also promotes the proliferation of hepatocytes in response to liver damage. Binding to its receptor formed by IL6ST and either IL11RA1 or IL11RA2 activates a signaling cascade that promotes cell proliferation, also in the context of various cancers. Signaling leads to the activation of intracellular protein kinases and the phosphorylation of STAT3. The interaction with the membrane-bound IL11RA and IL6ST stimulates 'classic signaling', whereas the binding of IL11 and soluble IL11RA to IL6ST stimulates 'trans-signaling'. In Mus musculus (Mouse), this protein is Interleukin-11.